We begin with the raw amino-acid sequence, 495 residues long: Probable leucine aminopeptidase 2 (495 aa).

Residues 1-21 (MKSQLLSLAVAVTTISQGVVG) form the signal peptide. Residues 130-216 (MAELVVAKNN…SQEDGKNLAT (87 aa)) enclose the PA domain. Asn142 and Asn235 each carry an N-linked (GlcNAc...) asparagine glycan. Zn(2+)-binding residues include His259 and Asp271. Residue Asn272 is glycosylated (N-linked (GlcNAc...) asparagine). Glu303 (proton acceptor) is an active-site residue. Positions 304 and 332 each coordinate Zn(2+). Residue Asn352 is glycosylated (N-linked (GlcNAc...) asparagine). His430 is a Zn(2+) binding site.

Belongs to the peptidase M28 family. M28A subfamily. As to quaternary structure, monomer. It depends on Zn(2+) as a cofactor.

Its subcellular location is the secreted. Functionally, extracellular aminopeptidase that releases a wide variety of amino acids from natural peptides and contributes to pathogenicity. The sequence is that of Probable leucine aminopeptidase 2 (LAP2) from Trichophyton verrucosum (strain HKI 0517).